Reading from the N-terminus, the 536-residue chain is Copine-1 (536 aa).

2 C2 domains span residues 1–113 and 122–244; these read MAHC…TLPL and GRGT…ECIH. Residues Asp21, Asp27, Asp79, Asp81, Asp91, Asp152, and Asp158 each contribute to the Ca(2+) site. Lys170 is modified (N6-acetyllysine). 3 residues coordinate Ca(2+): Asp213, Asp215, and Asp221. The VWFA domain maps to 282 to 484; the sequence is QINFTVGVDF…AARDIVQFVP (203 aa).

This sequence belongs to the copine family. As to quaternary structure, homodimer; homodimerizes via its C2 domains. Interacts with p65/RELA (via N-terminus); this interaction induces proteolytic cleavage of p65/RELA subunit and inhibition of NF-kappa-B transcriptional activity. Interacts (via VWFA domain) with ACTB, CCDC22, MYCBP2, PPP5C, RDX and UBE2O. Ca(2+) serves as cofactor. Expressed in liver, brain, heart, intestine, kidney and lung (at protein level).

The protein resides in the nucleus. The protein localises to the cytoplasm. It localises to the cell membrane. Functionally, calcium-dependent phospholipid-binding protein that plays a role in calcium-mediated intracellular processes. Involved in the TNF-alpha receptor signaling pathway in a calcium-dependent manner. Exhibits calcium-dependent phospholipid binding properties. Plays a role in neuronal progenitor cell differentiation; induces neurite outgrowth via a AKT-dependent signaling cascade and calcium-independent manner. May recruit target proteins to the cell membrane in a calcium-dependent manner. May function in membrane trafficking. Involved in TNF-alpha-induced NF-kappa-B transcriptional repression by inducing endoprotease processing of the transcription factor NF-kappa-B p65/RELA subunit. Also induces endoprotease processing of NF-kappa-B p50/NFKB1, p52/NFKB2, RELB and REL. This chain is Copine-1, found in Rattus norvegicus (Rat).